Here is a 293-residue protein sequence, read N- to C-terminus: Putative serine protease 42 (293 aa).

A signal peptide spans 1–26; sequence MSSGGGSRGLLAWLLLLQPWPGQNWA. Residues 33–60 form a disordered region; it reads LPSPLLSEEGGENPEASPAPGPEAGPPL. Residues 80 to 293 enclose the Peptidase S1 domain; the sequence is IVGGVDAEEG…IVSWGIGCGR (214 aa). Residues C105 and C121 are joined by a disulfide bond. H120 functions as the Charge relay system in the catalytic mechanism. N-linked (GlcNAc...) asparagine glycosylation is present at N141. D166 functions as the Charge relay system in the catalytic mechanism. N-linked (GlcNAc...) asparagine glycosylation occurs at N177. 3 cysteine pairs are disulfide-bonded: C200/C273, C232/C253, and C263/C291. The active-site Charge relay system is S267. N-linked (GlcNAc...) asparagine glycosylation is present at N276.

This sequence belongs to the peptidase S1 family.

The protein localises to the cytoplasm. It is found in the cell membrane. Functionally, plays a role in spermatogenesis. Involved in germ cell survival during meiosis. The sequence is that of Putative serine protease 42 from Homo sapiens (Human).